Reading from the N-terminus, the 407-residue chain is uncharacterized protein (407 aa).

Disordered stretches follow at residues 1–64, 110–276, and 314–341; these read MSRK…EPFD, GFGP…YPQF, and QSRP…HNNP. Over residues 7-32 the composition is skewed to polar residues; sequence KQSNPKRNYKNDNYFQENSYTMTNGF. The segment covering 33–44 has biased composition (basic and acidic residues); sequence TKDKDGKPVEFK. Residues 122 to 137 are compositionally biased toward acidic residues; that stretch reads DSDSEYSDECLTDECS. 2 stretches are compositionally biased toward polar residues: residues 138-147 and 184-201; these read DNYNKQSTDS and NFDN…NSQP. The segment covering 209-231 has biased composition (low complexity); that stretch reads SKSSSKSSKSNKSNKSSKSNKSS. The span at 232–246 shows a compositional bias: basic residues; the sequence is KSSKSKSNKHSKHKN. A compositionally biased stretch (basic and acidic residues) spans 247 to 258; it reads KSDSSSDSDEKT. Basic residues-rich tracts occupy residues 259–270 and 316–341; these read HKHKDRRHRRGR and RPRK…HNNP.

This is an uncharacterized protein from Acanthamoeba polyphaga mimivirus (APMV).